Reading from the N-terminus, the 336-residue chain is HTH-type transcriptional repressor PurR (336 aa).

Residues 2 to 56 (ATIKDVAKLAGVSTTTVSHVINKTRFVAEDTSKAVWDAIQQLNYSPSAVARSLKV) form the HTH lacI-type domain. A DNA-binding region (H-T-H motif) is located at residues 4 to 23 (IKDVAKLAGVSTTTVSHVIN). A DNA-binding region spans residues 48–56 (SAVARSLKV). Positions 73, 188, 219, and 273 each coordinate hypoxanthine.

As to quaternary structure, homodimer.

Its pathway is purine metabolism; purine nucleotide biosynthesis [regulation]. Its function is as follows. Is the main repressor of the genes involved in the de novo synthesis of purine nucleotides, regulating purB, purC, purEK, purF, purHD, purL, purMN and guaBA expression. PurR is allosterically activated to bind its cognate DNA by binding the purine corepressors, hypoxanthine or guanine, thereby effecting transcription repression. This Actinobacillus pleuropneumoniae serotype 5b (strain L20) protein is HTH-type transcriptional repressor PurR.